The chain runs to 640 residues: Cytochrome P450 monooxygenase cyp1 (640 aa).

N-linked (GlcNAc...) asparagine glycosylation occurs at Asn-71. A helical transmembrane segment spans residues 120-139 (LLVFLVGLFLGTIYLLYRYW). Asn-350 carries N-linked (GlcNAc...) asparagine glycosylation. Cys-572 contacts heme.

It belongs to the cytochrome P450 family. The cofactor is heme.

The protein resides in the membrane. It participates in secondary metabolite biosynthesis. In terms of biological role, cytochrome P450 monooxygenase; part of the gene cluster that mediates the biosynthesis of the glycolipid biosurfactant ustilagic acid (UA). UA is a secreted cellobiose glycolipid that is toxic for many microorganisms and confers biocontrol activity to U.maydis. UA consists of 15,16-dihydroxypalmitic or 2,15,16-trihydroxypalmitic acid, which is O-glycosidically linked to cellobiose at its terminal hydroxyl group. In addition, the cellobiose moiety is acetylated and acylated with a short-chain hydroxy fatty acid. UA biosynthesis starts with omega-hydroxylation of palmitic acid catalyzed by the cytochrome P450 monooxygenase cyp1. Terminal hydroxylation of palmitic acid precedes subterminal hydroxylation catalyzed by the cytochrome P450 monooxygenase cyp2. Sequential glucosylation of the hydroxy fatty acid is probably catalyzed by the glycosyltransferase ugt1. The cellobiose lipid is further decorated by acetylation of the proximal glucose residue and by acylation with a short-chain beta-hydroxy fatty acid at the distal glucose residue. The acyltransferase uat1 may be a good candidate for catalyzing either acetylation or acylation of the cellobiose lipid. The fatty acid synthase fas2 may be involved in synthesis of the carbon backbone of the short-chain beta-hydroxy fatty acid esterified to the cellobiose disaccharide. The secreted UA consists of a mixture of both alpha-hydroxylated and non-hydroxylated glycolipids; therefore, alpha-hydroxylation of the long-chain fatty, catalyzed by the fatty acid hydroxylase ahd1, occurs late in UA biosynthesis and may be the last step before secretion. The sequence is that of Cytochrome P450 monooxygenase cyp1 from Mycosarcoma maydis (Corn smut fungus).